Reading from the N-terminus, the 482-residue chain is Altronate oxidoreductase (482 aa).

Ile18–Ala29 contributes to the NAD(+) binding site.

It belongs to the mannitol dehydrogenase family. UxaB subfamily.

It carries out the reaction D-altronate + NAD(+) = keto-D-tagaturonate + NADH + H(+). It participates in carbohydrate metabolism; pentose and glucuronate interconversion. In Shigella sonnei (strain Ss046), this protein is Altronate oxidoreductase.